The primary structure comprises 174 residues: Balbiani ring protein 1 (174 aa).

Positions 28 to 174 are disordered; the sequence is KCRCTSAGKP…RPEGCGSAMR (147 aa). Tandem repeats lie at residues 42–52, 53–63, 64–74, 75–85, 124–134, 135–145, 146–156, and 157–167. 2 4 X 11 AA tandem repeats regions span residues 42–85 and 124–167; these read EPSK…PRPE. Composition is skewed to basic and acidic residues over residues 49–100 and 121–159; these read PRPE…EKCA and RKSEPSKGSKPRPEKPSKESKPRPEKPSKGSKPRPEKPS.

As to expression, salivary gland.

The protein localises to the secreted. In terms of biological role, used by the larvae to construct a supramolecular structure, the larval tube. This chain is Balbiani ring protein 1 (BR1), found in Chironomus tentans (Midge).